A 138-amino-acid chain; its full sequence is Acidic phospholipase A2 VpaPLA2 (138 aa).

A signal peptide spans 1–16 (MRTLWIVAVCLMGVEG). 7 disulfides stabilise this stretch: cysteine 42–cysteine 131, cysteine 44–cysteine 60, cysteine 59–cysteine 111, cysteine 65–cysteine 138, cysteine 66–cysteine 104, cysteine 73–cysteine 97, and cysteine 91–cysteine 102. 3 residues coordinate Ca(2+): tyrosine 43, glycine 45, and glycine 47. Residue histidine 63 is part of the active site. A Ca(2+)-binding site is contributed by aspartate 64. Aspartate 105 is an active-site residue.

This sequence belongs to the phospholipase A2 family. Group II subfamily. D49 sub-subfamily. It depends on Ca(2+) as a cofactor. As to expression, expressed by the venom gland.

The protein resides in the secreted. It carries out the reaction a 1,2-diacyl-sn-glycero-3-phosphocholine + H2O = a 1-acyl-sn-glycero-3-phosphocholine + a fatty acid + H(+). In terms of biological role, snake venom phospholipase A2 (PLA2) that causes a sudden decrease of arterial blood pressure when injected into rat, but is not lethal. When co-injected with an uncharacterized basic protein (which did not show any enzymatic activity, but also causes a drop in blood pressure), this synergistical mixture is lethal. PLA2 catalyzes the calcium-dependent hydrolysis of the 2-acyl groups in 3-sn-phosphoglycerides. This chain is Acidic phospholipase A2 VpaPLA2, found in Daboia palaestinae (Palestine viper).